Here is a 552-residue protein sequence, read N- to C-terminus: Non-structural protein NS1 (552 aa).

This sequence belongs to the orbivirus non-structural protein NS1 family.

The protein is Non-structural protein NS1 (Segment-5) of Antilocapra americana (Pronghorn).